The chain runs to 121 residues: Large ribosomal subunit protein uL22 (121 aa).

Belongs to the universal ribosomal protein uL22 family. As to quaternary structure, part of the 50S ribosomal subunit.

Its function is as follows. This protein binds specifically to 23S rRNA; its binding is stimulated by other ribosomal proteins, e.g. L4, L17, and L20. It is important during the early stages of 50S assembly. It makes multiple contacts with different domains of the 23S rRNA in the assembled 50S subunit and ribosome. In terms of biological role, the globular domain of the protein is located near the polypeptide exit tunnel on the outside of the subunit, while an extended beta-hairpin is found that lines the wall of the exit tunnel in the center of the 70S ribosome. The sequence is that of Large ribosomal subunit protein uL22 from Pseudarthrobacter chlorophenolicus (strain ATCC 700700 / DSM 12829 / CIP 107037 / JCM 12360 / KCTC 9906 / NCIMB 13794 / A6) (Arthrobacter chlorophenolicus).